A 785-amino-acid chain; its full sequence is Phenylalanine--tRNA ligase beta subunit (785 aa).

A tRNA-binding domain is found at 38 to 150; the sequence is CEHLKTFVIA…NTYNVGDTFF (113 aa). In terms of domain architecture, B5 spans 394–470; sequence VDNIELNFFP…RLYGYDKICE (77 aa). Residues aspartate 448, aspartate 454, glutamate 457, and glutamate 458 each contribute to the Mg(2+) site. In terms of domain architecture, FDX-ACB spans 690-783; the sequence is SCYQSVKRDF…VAEKLGGVLR (94 aa).

The protein belongs to the phenylalanyl-tRNA synthetase beta subunit family. Type 1 subfamily. As to quaternary structure, tetramer of two alpha and two beta subunits. Mg(2+) is required as a cofactor.

It localises to the cytoplasm. It catalyses the reaction tRNA(Phe) + L-phenylalanine + ATP = L-phenylalanyl-tRNA(Phe) + AMP + diphosphate + H(+). The sequence is that of Phenylalanine--tRNA ligase beta subunit from Ehrlichia canis (strain Jake).